The sequence spans 251 residues: Small ribosomal subunit protein uS3 (251 aa).

A KH type-2 domain is found at Ile39–Lys111.

The protein belongs to the universal ribosomal protein uS3 family. As to quaternary structure, part of the 30S ribosomal subunit. Forms a tight complex with proteins S10 and S14.

Its function is as follows. Binds the lower part of the 30S subunit head. Binds mRNA in the 70S ribosome, positioning it for translation. This is Small ribosomal subunit protein uS3 from Phytoplasma sp. (strain STRAWB1).